The following is a 485-amino-acid chain: Inosine-5'-monophosphate dehydrogenase (485 aa).

2 consecutive CBS domains span residues 95-154 (VITN…IDDV) and 155-215 (MTKE…AKDS). Residues aspartate 249 and 299-301 (GIG) each bind NAD(+). K(+)-binding residues include glycine 301 and glycine 303. Serine 304 is a binding site for IMP. Cysteine 306 provides a ligand contact to K(+). The Thioimidate intermediate role is filled by cysteine 306. Residues 339 to 341 (DGG), 362 to 363 (GS), and 386 to 390 (YRGMG) each bind IMP. Catalysis depends on arginine 402, which acts as the Proton acceptor. IMP is bound at residue glutamate 414. Residues glutamate 468, serine 469, and histidine 470 each contribute to the K(+) site.

Belongs to the IMPDH/GMPR family. As to quaternary structure, homotetramer. It depends on K(+) as a cofactor.

It carries out the reaction IMP + NAD(+) + H2O = XMP + NADH + H(+). It participates in purine metabolism; XMP biosynthesis via de novo pathway; XMP from IMP: step 1/1. Mycophenolic acid (MPA) is a non-competitive inhibitor that prevents formation of the closed enzyme conformation by binding to the same site as the amobile flap. In contrast, mizoribine monophosphate (MZP) is a competitive inhibitor that induces the closed conformation. MPA is a potent inhibitor of mammalian IMPDHs but a poor inhibitor of the bacterial enzymes. MZP is a more potent inhibitor of bacterial IMPDH. Its function is as follows. Catalyzes the conversion of inosine 5'-phosphate (IMP) to xanthosine 5'-phosphate (XMP), the first committed and rate-limiting step in the de novo synthesis of guanine nucleotides, and therefore plays an important role in the regulation of cell growth. This chain is Inosine-5'-monophosphate dehydrogenase, found in Halalkalibacterium halodurans (strain ATCC BAA-125 / DSM 18197 / FERM 7344 / JCM 9153 / C-125) (Bacillus halodurans).